The following is a 317-amino-acid chain: Ferrochelatase (317 aa).

Positions 192 and 271 each coordinate Fe cation.

This sequence belongs to the ferrochelatase family.

The protein resides in the cytoplasm. It catalyses the reaction heme b + 2 H(+) = protoporphyrin IX + Fe(2+). It participates in porphyrin-containing compound metabolism; protoheme biosynthesis; protoheme from protoporphyrin-IX: step 1/1. In terms of biological role, catalyzes the ferrous insertion into protoporphyrin IX. The chain is Ferrochelatase from Geobacter sp. (strain M21).